The primary structure comprises 630 residues: MDLTQIQNPSFLKDMSISELEGLSEDIRKFLIEELSQTGGHIAPNLGVVELTIALHKLFDSPKDKFLWDVGHQSYVHKILTGRAKEFGTLRQYQGLCGFPKRCESEHDVWETGHSSTSLSAAMGMALARDLKKTKEYVIPIIGDGALTGGMALEALNHIGHEKTDMIVILNDNEMSIAPNVGALHNVLGRLRTAGKYHWVKDELEYILKKIPAVGGKVAATAEKIKDSLKYLLVSGVFFEELGFTYLGPVDGHDYEKLFETLQYAKKTKGPVLVHVITKKGKGYKPAESDVIGTWHGTGPYKIESGDFVKPKEVAPAWSAVVSETVLKLARTDERIVAITPAMPVGSKLEKFQKEFPDRMIDVGIAEQHATTMAAGMATQGMKPFLAIYSTFLQRAYDQVVHDICRQNLNVFIGIDRSGLVGADGETHQGVFDISFLRHLPNMVIMMPKDENEGQHLVYTAMQYEDGPIALRYARGNGLGVHMDEELKAIPIGSWETLKEGTQAAILTFGTTIPMAMEAAERLEKAGVSVKVVNARFIKPMDEAYLHDLLGKNIPILTIEEACLIGGFGTGVVEFASENGYHSALVERMGIPDRFIEHGSVTKLLEEIGLTTDAVVDRIHTMIPSKQKRA.

Residues His-72 and 113-115 contribute to the thiamine diphosphate site; that span reads GHS. Asp-144 contributes to the Mg(2+) binding site. Thiamine diphosphate contacts are provided by residues 145-146, Asn-173, Tyr-284, and Glu-367; that span reads GA. Asn-173 lines the Mg(2+) pocket.

This sequence belongs to the transketolase family. DXPS subfamily. In terms of assembly, homodimer. It depends on Mg(2+) as a cofactor. The cofactor is thiamine diphosphate.

The catalysed reaction is D-glyceraldehyde 3-phosphate + pyruvate + H(+) = 1-deoxy-D-xylulose 5-phosphate + CO2. The protein operates within metabolic intermediate biosynthesis; 1-deoxy-D-xylulose 5-phosphate biosynthesis; 1-deoxy-D-xylulose 5-phosphate from D-glyceraldehyde 3-phosphate and pyruvate: step 1/1. In terms of biological role, catalyzes the acyloin condensation reaction between C atoms 2 and 3 of pyruvate and glyceraldehyde 3-phosphate to yield 1-deoxy-D-xylulose-5-phosphate (DXP). This chain is 1-deoxy-D-xylulose-5-phosphate synthase, found in Bacillus cereus (strain AH820).